A 175-amino-acid chain; its full sequence is Co-chaperone protein HscB homolog (175 aa).

A J domain is found at 7–79; it reads SHFDLFHLPA…LKRATYLLHL (73 aa).

The protein belongs to the HscB family. In terms of assembly, interacts with HscA and stimulates its ATPase activity.

Functionally, co-chaperone involved in the maturation of iron-sulfur cluster-containing proteins. Seems to help targeting proteins to be folded toward HscA. The sequence is that of Co-chaperone protein HscB homolog from Burkholderia mallei (strain ATCC 23344).